A 429-amino-acid chain; its full sequence is Enolase (429 aa).

Gln-163 contacts (2R)-2-phosphoglycerate. Glu-205 acts as the Proton donor in catalysis. Asp-242, Glu-285, and Asp-312 together coordinate Mg(2+). (2R)-2-phosphoglycerate-binding residues include Lys-337, Arg-366, Ser-367, and Lys-388. Catalysis depends on Lys-337, which acts as the Proton acceptor.

The protein belongs to the enolase family. In terms of assembly, component of the RNA degradosome, a multiprotein complex involved in RNA processing and mRNA degradation. Mg(2+) is required as a cofactor.

The protein localises to the cytoplasm. It localises to the secreted. It is found in the cell surface. It carries out the reaction (2R)-2-phosphoglycerate = phosphoenolpyruvate + H2O. The protein operates within carbohydrate degradation; glycolysis; pyruvate from D-glyceraldehyde 3-phosphate: step 4/5. Functionally, catalyzes the reversible conversion of 2-phosphoglycerate (2-PG) into phosphoenolpyruvate (PEP). It is essential for the degradation of carbohydrates via glycolysis. The polypeptide is Enolase (Alkalilimnicola ehrlichii (strain ATCC BAA-1101 / DSM 17681 / MLHE-1)).